Reading from the N-terminus, the 85-residue chain is Small ribosomal subunit protein bS16 (85 aa).

It belongs to the bacterial ribosomal protein bS16 family.

This Metamycoplasma arthritidis (strain 158L3-1) (Mycoplasma arthritidis) protein is Small ribosomal subunit protein bS16.